The following is a 311-amino-acid chain: Methionyl-tRNA formyltransferase (311 aa).

117–120 (SLLP) is a binding site for (6S)-5,6,7,8-tetrahydrofolate.

It belongs to the Fmt family.

The catalysed reaction is L-methionyl-tRNA(fMet) + (6R)-10-formyltetrahydrofolate = N-formyl-L-methionyl-tRNA(fMet) + (6S)-5,6,7,8-tetrahydrofolate + H(+). Its function is as follows. Attaches a formyl group to the free amino group of methionyl-tRNA(fMet). The formyl group appears to play a dual role in the initiator identity of N-formylmethionyl-tRNA by promoting its recognition by IF2 and preventing the misappropriation of this tRNA by the elongation apparatus. The protein is Methionyl-tRNA formyltransferase of Bordetella avium (strain 197N).